The chain runs to 90 residues: Small ribosomal subunit protein uS17 (90 aa).

This sequence belongs to the universal ribosomal protein uS17 family. In terms of assembly, part of the 30S ribosomal subunit.

In terms of biological role, one of the primary rRNA binding proteins, it binds specifically to the 5'-end of 16S ribosomal RNA. The chain is Small ribosomal subunit protein uS17 from Burkholderia mallei (strain NCTC 10247).